The primary structure comprises 1203 residues: Metabotropic glutamate receptor 5 (1203 aa).

An N-terminal signal peptide occupies residues 1–20 (MVLLLILSVLLLKEDVRGSA). The Extracellular portion of the chain corresponds to 21–579 (QSSERRVVAH…QYLRWGDPEP (559 aa)). A disulfide bridge connects residues Cys-57 and Cys-99. Tyr-64 is a binding site for L-glutamate. A glycan (N-linked (GlcNAc...) asparagine) is linked at Asn-88. Residues Ser-151 and 172 to 174 (SAT) contribute to the L-glutamate site. Residue Asn-209 is glycosylated (N-linked (GlcNAc...) asparagine). Position 222 (Tyr-222) interacts with L-glutamate. Disulfide bonds link Cys-240–Cys-529, Cys-275–Cys-277, Cys-364–Cys-380, Cys-418–Cys-425, Cys-510–Cys-530, Cys-514–Cys-533, Cys-536–Cys-548, and Cys-551–Cys-564. Residue Asp-304 coordinates L-glutamate. Asn-377 and Asn-381 each carry an N-linked (GlcNAc...) asparagine glycan. Lys-395 contacts L-glutamate. Asn-444 is a glycosylation site (N-linked (GlcNAc...) asparagine). A helical transmembrane segment spans residues 580–602 (IAAVVFACLGLLATLFVTVIFII). Topologically, residues 603-612 (YRDTPVVKSS) are cytoplasmic. The helical transmembrane segment at 613 to 635 (SRELCYIILAGICLGYLCTFCLI) threads the bilayer. Over 636–643 (AKPKQIYC) the chain is Extracellular. Cys-643 and Cys-732 are joined by a disulfide. Residues 644-666 (YLQRIGIGLSPAMSYSALVTKTN) form a helical membrane-spanning segment. Over 667 to 692 (RIARILAGSKKKICTKKPRFMSACAQ) the chain is Cytoplasmic. A helical transmembrane segment spans residues 693 to 713 (LVIAFILICIQLGIIVALFIM). Topologically, residues 714 to 736 (EPPDIMHDYPSIREVYLICNTTN) are extracellular. An N-linked (GlcNAc...) asparagine glycan is attached at Asn-733. Residues 737-758 (LGVVTPLGYNGLLILSCTFYAF) form a helical membrane-spanning segment. Topologically, residues 759 to 771 (KTRNVPANFNEAK) are cytoplasmic. Residues 772–794 (YIAFTMYTTCIIWLAFVPIYFGS) form a helical membrane-spanning segment. Topologically, residues 795-797 (NYK) are extracellular. The helical transmembrane segment at 798-819 (IITMCFSVSLSATVALGCMFVP) threads the bilayer. Residues 820–1203 (KVYIILAKPE…RDYTQSSSSL (384 aa)) are Cytoplasmic-facing. Ser-860 is modified (phosphoserine). At Arg-868 the chain carries Omega-N-methylarginine. Disordered stretches follow at residues 892-970 (FTPK…GSGP), 1003-1054 (EESF…GSLM), and 1122-1182 (GAQG…ALCI). Positions 905–920 (TMSSSNGKSVTWAQNE) are enriched in polar residues. The residue at position 924 (Arg-924) is an Omega-N-methylarginine. The span at 1007–1017 (PAAARPRSPSP) shows a compositional bias: low complexity. A phosphoserine mark is found at Ser-1014 and Ser-1016. Polar residues-rich tracts occupy residues 1039–1054 (HSET…GSLM) and 1165–1176 (DSGSTTPNSPVS).

It belongs to the G-protein coupled receptor 3 family. In terms of assembly, interacts with RYR1, RYR2, ITPR1, SHANK1 and SHANK3. The PPXXF motif binds HOMER1, HOMER2 and HOMER3. Interacts with SIAH1 and TAMALIN. Interacts with NCDN. Interacts with NECAB2. Interacts with CAMK2A. As to expression, widely distributed in neuronal cells of the central nervous system.

Its subcellular location is the cell membrane. In terms of biological role, G-protein coupled receptor for glutamate. Ligand binding causes a conformation change that triggers signaling via guanine nucleotide-binding proteins (G proteins) and modulates the activity of down-stream effectors. Signaling activates a phosphatidylinositol-calcium second messenger system and generates a calcium-activated chloride current. Plays an important role in the regulation of synaptic plasticity and the modulation of the neural network activity. The protein is Metabotropic glutamate receptor 5 (Grm5) of Rattus norvegicus (Rat).